Here is a 103-residue protein sequence, read N- to C-terminus: Small ribosomal subunit protein uS10 (103 aa).

Belongs to the universal ribosomal protein uS10 family. As to quaternary structure, part of the 30S ribosomal subunit.

In terms of biological role, involved in the binding of tRNA to the ribosomes. This Picrophilus torridus (strain ATCC 700027 / DSM 9790 / JCM 10055 / NBRC 100828 / KAW 2/3) protein is Small ribosomal subunit protein uS10.